Reading from the N-terminus, the 416-residue chain is uncharacterized protein (416 aa).

A disordered region spans residues 341–360; the sequence is EDREKGSQHTNNTHHHKRNL.

This is an uncharacterized protein from Human cytomegalovirus (strain AD169) (HHV-5).